Here is a 493-residue protein sequence, read N- to C-terminus: ATP-dependent rRNA helicase RRP3 (493 aa).

2 stretches are compositionally biased toward basic and acidic residues: residues 26–42 (ALEN…KDSE) and 51–62 (ERPAKKQAKDEK). The segment at 26-68 (ALENQKKMQAASRKDSESDSSDEEVERPAKKQAKDEKVEEPEE) is disordered. Residues 73–101 (ESFAQLNLVPELIQACQNLNFTKPTPIQA) carry the Q motif motif. The Helicase ATP-binding domain maps to 104-276 (IPPALAGSDV…RASLTNPVKC (173 aa)). Residue 117–124 (AQTGSGKT) participates in ATP binding. The short motif at 223 to 226 (DEAD) is the DEAD box element. One can recognise a Helicase C-terminal domain in the interval 307–453 (LLNEFIGKTV…NIILTLRDSV (147 aa)). Positions 467 to 493 (RNKEKQARGKGRRGRMMAKENMDREEK) are disordered. The span at 483-493 (MAKENMDREEK) shows a compositional bias: basic and acidic residues.

It belongs to the DEAD box helicase family. DDX47/RRP3 subfamily. Interacts with the SSU processome.

The protein localises to the nucleus. It carries out the reaction ATP + H2O = ADP + phosphate + H(+). Its function is as follows. ATP-dependent rRNA helicase required for pre-ribosomal RNA processing. Involved in the maturation of the 35S-pre-rRNA and to its cleavage to mature 18S rRNA. The chain is ATP-dependent rRNA helicase RRP3 from Candida glabrata (strain ATCC 2001 / BCRC 20586 / JCM 3761 / NBRC 0622 / NRRL Y-65 / CBS 138) (Yeast).